We begin with the raw amino-acid sequence, 155 residues long: Small ribosomal subunit protein uS7c (155 aa).

Belongs to the universal ribosomal protein uS7 family. In terms of assembly, part of the 30S ribosomal subunit.

Its subcellular location is the plastid. The protein localises to the chloroplast. Functionally, one of the primary rRNA binding proteins, it binds directly to 16S rRNA where it nucleates assembly of the head domain of the 30S subunit. This is Small ribosomal subunit protein uS7c (rps7) from Allium textile (Textile onion).